The chain runs to 397 residues: Phosphonopyruvate decarboxylase (397 aa).

The protein belongs to the TPP enzyme family. Requires thiamine diphosphate as cofactor. Mg(2+) serves as cofactor.

It carries out the reaction 3-phosphonopyruvate + H(+) = phosphonoacetaldehyde + CO2. The protein operates within secondary metabolite biosynthesis; bialaphos biosynthesis. Its function is as follows. Involved in the biosynthesis of phosphinothricin tripeptide (PTT), also known as bialaphos (BA), a natural-product antibiotic and potent herbicide. Catalyzes the decarboxylation of phosphonopyruvate (PnPy) to generate phosphonoacetaldehyde (PnAA). The protein is Phosphonopyruvate decarboxylase of Streptomyces viridochromogenes (strain DSM 40736 / JCM 4977 / BCRC 1201 / Tue 494).